We begin with the raw amino-acid sequence, 256 residues long: Cell division protein FtsQ (256 aa).

Residues 1 to 23 lie on the Cytoplasmic side of the membrane; the sequence is MIKAVKMNTSFDKEKVRKHLPGA. A helical membrane pass occupies residues 24-44; the sequence is IFLSLVVITSLWLVISTISWM. At 45-256 the chain is on the periplasmic side; that stretch reads TDEDRLPLSH…SDDVENKEEN (212 aa). The 71-residue stretch at 50–120 folds into the POTRA domain; the sequence is LPLSHMIIQG…ETIKVFVVEH (71 aa).

It belongs to the FtsQ/DivIB family. FtsQ subfamily. As to quaternary structure, part of a complex composed of FtsB, FtsL and FtsQ.

It is found in the cell inner membrane. Functionally, essential cell division protein. May link together the upstream cell division proteins, which are predominantly cytoplasmic, with the downstream cell division proteins, which are predominantly periplasmic. May control correct divisome assembly. This chain is Cell division protein FtsQ, found in Aliivibrio fischeri (strain ATCC 700601 / ES114) (Vibrio fischeri).